The chain runs to 937 residues: AP-2 complex subunit beta (937 aa).

At Thr-2 the chain carries N-acetylthreonine. Phosphoserine is present on Ser-4. The residue at position 265 (Lys-265) is an N6-acetyllysine. Phosphotyrosine is present on residues Tyr-737 and Tyr-928.

It belongs to the adaptor complexes large subunit family. Adapter protein complex 2 (AP-2) is a heterotetramer composed of two large adaptins (alpha-type subunit AP2A1 or AP2A2 and beta-type subunit AP2B1), a medium adaptin (mu-type subunit AP2M1) and a small adaptin (sigma-type subunit AP2S1). Interacts with EPN1. Interacts with EPS15; clathrin competes with EPS15. Interacts with SNAP91; clathrin competes with SNAP91. Interacts with CLTC; clathrin competes with EPS15, SNAP91 and PIP5K1C. Interacts with LDLRAP1. Interacts with AMPH and BIN1. Interacts with ARF6 (GDP-bound). Interacts (dephosphorylated at Tyr-737) with ARRB1; phosphorylation of AP2B1 at Tyr-737 disrupts the interaction. Interacts with SLC2A8. Interacts with SCYL1 and SCYL2. Interacts with TGFBR1 and TGFBR2. Interacts with PIP5K1C; clathrin competes with PIP5K1C. Interacts with DENND1B. Interacts with FCHO1. Interacts with RFTN1. Interacts with KIAA1107. Together with AP2A1 or AP2A2 and AP2M1, it interacts with ADAM10; this interaction facilitates ADAM10 endocytosis from the plasma membrane during long-term potentiation in hippocampal neurons. Post-translationally, the N-terminus is blocked. In terms of processing, phosphorylation at Tyr-737 by SRC occurs at the plasma membrane in clathrin-coated vesicles (CCVs).

It is found in the cell membrane. The protein resides in the membrane. The protein localises to the coated pit. Functionally, component of the adaptor protein complex 2 (AP-2). Adaptor protein complexes function in protein transport via transport vesicles in different membrane traffic pathways. Adaptor protein complexes are vesicle coat components and appear to be involved in cargo selection and vesicle formation. AP-2 is involved in clathrin-dependent endocytosis in which cargo proteins are incorporated into vesicles surrounded by clathrin (clathrin-coated vesicles, CCVs) which are destined for fusion with the early endosome. The clathrin lattice serves as a mechanical scaffold but is itself unable to bind directly to membrane components. Clathrin-associated adaptor protein (AP) complexes which can bind directly to both the clathrin lattice and to the lipid and protein components of membranes are considered to be the major clathrin adaptors contributing the CCV formation. AP-2 also serves as a cargo receptor to selectively sort the membrane proteins involved in receptor-mediated endocytosis. AP-2 seems to play a role in the recycling of synaptic vesicle membranes from the presynaptic surface. AP-2 recognizes Y-X-X-[FILMV] (Y-X-X-Phi) and [ED]-X-X-X-L-[LI] endocytosis signal motifs within the cytosolic tails of transmembrane cargo molecules. AP-2 may also play a role in maintaining normal post-endocytic trafficking through the ARF6-regulated, non-clathrin pathway. During long-term potentiation in hippocampal neurons, AP-2 is responsible for the endocytosis of ADAM10. The AP-2 beta subunit acts via its C-terminal appendage domain as a scaffolding platform for endocytic accessory proteins; at least some clathrin-associated sorting proteins (CLASPs) are recognized by their [DE]-X(1,2)-F-X-X-[FL]-X-X-X-R motif. The AP-2 beta subunit binds to clathrin heavy chain, promoting clathrin lattice assembly; clathrin displaces at least some CLASPs from AP2B1 which probably then can be positioned for further coat assembly. This chain is AP-2 complex subunit beta (AP2B1), found in Bos taurus (Bovine).